The sequence spans 250 residues: Ubiquinone biosynthesis O-methyltransferase (250 aa).

Residues R41, G72, D93, and M136 each coordinate S-adenosyl-L-methionine.

This sequence belongs to the methyltransferase superfamily. UbiG/COQ3 family.

It carries out the reaction a 3-demethylubiquinol + S-adenosyl-L-methionine = a ubiquinol + S-adenosyl-L-homocysteine + H(+). The catalysed reaction is a 3-(all-trans-polyprenyl)benzene-1,2-diol + S-adenosyl-L-methionine = a 2-methoxy-6-(all-trans-polyprenyl)phenol + S-adenosyl-L-homocysteine + H(+). It participates in cofactor biosynthesis; ubiquinone biosynthesis. In terms of biological role, O-methyltransferase that catalyzes the 2 O-methylation steps in the ubiquinone biosynthetic pathway. In Agrobacterium fabrum (strain C58 / ATCC 33970) (Agrobacterium tumefaciens (strain C58)), this protein is Ubiquinone biosynthesis O-methyltransferase.